The following is a 296-amino-acid chain: Bifunctional protein FolD (296 aa).

NADP(+) contacts are provided by residues 166-168 (GRS), serine 191, and isoleucine 232.

The protein belongs to the tetrahydrofolate dehydrogenase/cyclohydrolase family. In terms of assembly, homodimer.

The enzyme catalyses (6R)-5,10-methylene-5,6,7,8-tetrahydrofolate + NADP(+) = (6R)-5,10-methenyltetrahydrofolate + NADPH. It carries out the reaction (6R)-5,10-methenyltetrahydrofolate + H2O = (6R)-10-formyltetrahydrofolate + H(+). It participates in one-carbon metabolism; tetrahydrofolate interconversion. In terms of biological role, catalyzes the oxidation of 5,10-methylenetetrahydrofolate to 5,10-methenyltetrahydrofolate and then the hydrolysis of 5,10-methenyltetrahydrofolate to 10-formyltetrahydrofolate. The sequence is that of Bifunctional protein FolD from Cereibacter sphaeroides (strain ATCC 17029 / ATH 2.4.9) (Rhodobacter sphaeroides).